Consider the following 271-residue polypeptide: Ribosomal RNA small subunit methyltransferase A (271 aa).

Residues His-11, Leu-13, Gly-38, Glu-58, Asp-86, and Asn-101 each coordinate S-adenosyl-L-methionine.

It belongs to the class I-like SAM-binding methyltransferase superfamily. rRNA adenine N(6)-methyltransferase family. RsmA subfamily.

It is found in the cytoplasm. The catalysed reaction is adenosine(1518)/adenosine(1519) in 16S rRNA + 4 S-adenosyl-L-methionine = N(6)-dimethyladenosine(1518)/N(6)-dimethyladenosine(1519) in 16S rRNA + 4 S-adenosyl-L-homocysteine + 4 H(+). In terms of biological role, specifically dimethylates two adjacent adenosines (A1518 and A1519) in the loop of a conserved hairpin near the 3'-end of 16S rRNA in the 30S particle. May play a critical role in biogenesis of 30S subunits. In Helicobacter pylori (strain HPAG1), this protein is Ribosomal RNA small subunit methyltransferase A.